A 298-amino-acid polypeptide reads, in one-letter code: ADP/ATP translocase 3 (298 aa).

Residue Met1 is modified to N-acetylmethionine. Topologically, residues 1-7 (MTEQAIS) are mitochondrial intermembrane. Thr2 is modified (N-acetylthreonine; in ADP/ATP translocase 3, N-terminally processed). The Solcar 1 repeat unit spans residues 6 to 98 (ISFAKDFLAG…FAFKDKYKQI (93 aa)). A helical transmembrane segment spans residues 8 to 37 (FAKDFLAGGIAAAISKTAVAPIERVKLLLQ). Over 38–74 (VQHASKQIAADKQYKGIVDCIVRIPKEQGVLSFWRGN) the chain is Mitochondrial matrix. Lys52 carries the post-translational modification N6,N6,N6-trimethyllysine. Residues 75–99 (LANVIRYFPTQALNFAFKDKYKQIF) traverse the membrane as a helical segment. ADP is bound by residues Arg80 and Lys92. At 100–109 (LGGVDKHTQF) the chain is on the mitochondrial intermembrane side. N6-acetyllysine is present on Lys105. Residues 110–130 (WRYFAGNLASGGAAGATSLCF) traverse the membrane as a helical segment. Solcar repeat units lie at residues 111–201 (RYFA…AKGM) and 212–297 (VSWM…LKKV). Over 131 to 178 (VYPLDFARTRLAADVGKSATEREFKGLGDCLVKITKSDGIRGLYQGFN) the chain is Mitochondrial matrix. The chain crosses the membrane as a helical span at residues 179 to 199 (VSVQGIIIYRAAYFGVYGTAK). Over 200-210 (GMLPDPRNTHI) the chain is Mitochondrial intermembrane. The helical transmembrane segment at 211-231 (VVSWMIAQTVTAVAGVFSYPF) threads the bilayer. The Mitochondrial matrix segment spans residues 232 to 273 (DTVRRRMMMQSGRKGADIMYKGTLDCWRKIFKDEGGKAFFKG). Arg235 lines the ADP pocket. Residues 235–240 (RRRMMM) are important for transport activity. The Nucleotide carrier signature motif signature appears at 235–240 (RRRMMM). Lys268 is subject to N6-acetyllysine. Residues 274–291 (AWSNVLRGMGGAFVLVLY) traverse the membrane as a helical segment. Residues 292–298 (DELKKVI) are Mitochondrial intermembrane-facing.

This sequence belongs to the mitochondrial carrier (TC 2.A.29) family. In terms of assembly, monomer. Found in a complex with ARL2, ARL2BP and SLC25A6/ANT3. Post-translationally, trimethylated by ANTKMT at Lys-52.

It is found in the mitochondrion inner membrane. The protein localises to the membrane. The enzyme catalyses ADP(in) + ATP(out) = ADP(out) + ATP(in). It carries out the reaction H(+)(in) = H(+)(out). With respect to regulation, the matrix-open state (m-state) is inhibited by the membrane-permeable bongkrekic acid (BKA). The cytoplasmic-open state (c-state) is inhibited by the membrane-impermeable toxic inhibitor carboxyatractyloside (CATR). Proton transporter activity is inhibited by ADP:ATP antiporter activity. In terms of biological role, ADP:ATP antiporter that mediates import of ADP into the mitochondrial matrix for ATP synthesis, and export of ATP out to fuel the cell. Cycles between the cytoplasmic-open state (c-state) and the matrix-open state (m-state): operates by the alternating access mechanism with a single substrate-binding site intermittently exposed to either the cytosolic (c-state) or matrix (m-state) side of the inner mitochondrial membrane. In addition to its ADP:ATP antiporter activity, also involved in mitochondrial uncoupling and mitochondrial permeability transition pore (mPTP) activity. Plays a role in mitochondrial uncoupling by acting as a proton transporter: proton transport uncouples the proton flows via the electron transport chain and ATP synthase to reduce the efficiency of ATP production and cause mitochondrial thermogenesis. Proton transporter activity is inhibited by ADP:ATP antiporter activity, suggesting that SLC25A6/ANT3 acts as a master regulator of mitochondrial energy output by maintaining a delicate balance between ATP production (ADP:ATP antiporter activity) and thermogenesis (proton transporter activity). Proton transporter activity requires free fatty acids as cofactor, but does not transport it. Also plays a key role in mPTP opening, a non-specific pore that enables free passage of the mitochondrial membranes to solutes of up to 1.5 kDa, and which contributes to cell death. It is however unclear if SLC25A6/ANT3 constitutes a pore-forming component of mPTP or regulates it. The protein is ADP/ATP translocase 3 of Sus scrofa (Pig).